We begin with the raw amino-acid sequence, 260 residues long: Cytochrome c1-2, heme protein, mitochondrial (260 aa).

The transit peptide at 1–17 (IGAGVSGLLGFATVASA) directs the protein to the mitochondrion. Residues 18 to 221 (DEAEHGLECP…AAEPEMEERK (204 aa)) lie on the Mitochondrial intermembrane side of the membrane. One can recognise a Cytochrome c domain in the interval 43 to 150 (ASIRRGHQVY…NGQNYVFALL (108 aa)). The heme c site is built by Cys-56, Cys-59, His-60, and Met-179. Residues 222–241 (LMGFKWIFVLSLALLQAAYY) traverse the membrane as a helical segment. Residues 242 to 260 (RRLRWSVLKSRKLVLDVVN) are Mitochondrial matrix-facing.

It belongs to the cytochrome c family. Component of the ubiquinol-cytochrome c oxidoreductase (cytochrome b-c1 complex, complex III, CIII), a multisubunit enzyme composed of 3 respiratory subunits cytochrome b, cytochrome c1 and Rieske protein, 2 core protein subunits, and additional low-molecular weight protein subunits. The complex exists as an obligatory dimer and forms supercomplexes (SCs) in the inner mitochondrial membrane with cytochrome c oxidase (complex IV, CIV). Heme c serves as cofactor. As to expression, in all tissues analyzed.

The protein resides in the mitochondrion inner membrane. It catalyses the reaction a quinol + 2 Fe(III)-[cytochrome c](out) = a quinone + 2 Fe(II)-[cytochrome c](out) + 2 H(+)(out). Component of the ubiquinol-cytochrome c oxidoreductase, a multisubunit transmembrane complex that is part of the mitochondrial electron transport chain which drives oxidative phosphorylation. The respiratory chain contains 3 multisubunit complexes succinate dehydrogenase (complex II, CII), ubiquinol-cytochrome c oxidoreductase (cytochrome b-c1 complex, complex III, CIII) and cytochrome c oxidase (complex IV, CIV), that cooperate to transfer electrons derived from NADH and succinate to molecular oxygen, creating an electrochemical gradient over the inner membrane that drives transmembrane transport and the ATP synthase. The cytochrome b-c1 complex catalyzes electron transfer from ubiquinol to cytochrome c, linking this redox reaction to translocation of protons across the mitochondrial inner membrane, with protons being carried across the membrane as hydrogens on the quinol. In the process called Q cycle, 2 protons are consumed from the matrix, 4 protons are released into the intermembrane space and 2 electrons are passed to cytochrome c. Cytochrome c1 is a catalytic core subunit containing a c-type heme. It transfers electrons from the [2Fe-2S] iron-sulfur cluster of the Rieske protein to cytochrome c. The protein is Cytochrome c1-2, heme protein, mitochondrial (CYCL) of Solanum tuberosum (Potato).